The primary structure comprises 322 residues: Ribosomal RNA small subunit methyltransferase H (322 aa).

S-adenosyl-L-methionine is bound by residues 40–42 (GGH), aspartate 60, phenylalanine 84, aspartate 106, and glutamine 113.

It belongs to the methyltransferase superfamily. RsmH family.

Its subcellular location is the cytoplasm. It catalyses the reaction cytidine(1402) in 16S rRNA + S-adenosyl-L-methionine = N(4)-methylcytidine(1402) in 16S rRNA + S-adenosyl-L-homocysteine + H(+). Specifically methylates the N4 position of cytidine in position 1402 (C1402) of 16S rRNA. The chain is Ribosomal RNA small subunit methyltransferase H from Aggregatibacter aphrophilus (strain NJ8700) (Haemophilus aphrophilus).